We begin with the raw amino-acid sequence, 125 residues long: Large ribosomal subunit protein bL12 (125 aa).

Belongs to the bacterial ribosomal protein bL12 family. Homodimer. Part of the ribosomal stalk of the 50S ribosomal subunit. Forms a multimeric L10(L12)X complex, where L10 forms an elongated spine to which 2 to 4 L12 dimers bind in a sequential fashion. Binds GTP-bound translation factors.

Its function is as follows. Forms part of the ribosomal stalk which helps the ribosome interact with GTP-bound translation factors. Is thus essential for accurate translation. In Thermus thermophilus (strain ATCC BAA-163 / DSM 7039 / HB27), this protein is Large ribosomal subunit protein bL12.